The chain runs to 108 residues: uncharacterized protein (108 aa).

The next 2 helical transmembrane spans lie at 5-27 (TVYG…QLEI) and 83-105 (IFLM…LNIF).

It localises to the membrane. This is an uncharacterized protein from Schizosaccharomyces pombe (strain 972 / ATCC 24843) (Fission yeast).